The following is a 567-amino-acid chain: Oxygen-dependent choline dehydrogenase (567 aa).

4 to 33 (DYIIIGAGSAGNVLAARLTEDADVTVLLLE) contacts FAD. H473 (proton acceptor) is an active-site residue.

Belongs to the GMC oxidoreductase family. Requires FAD as cofactor.

The enzyme catalyses choline + A = betaine aldehyde + AH2. The catalysed reaction is betaine aldehyde + NAD(+) + H2O = glycine betaine + NADH + 2 H(+). It participates in amine and polyamine biosynthesis; betaine biosynthesis via choline pathway; betaine aldehyde from choline (cytochrome c reductase route): step 1/1. Functionally, involved in the biosynthesis of the osmoprotectant glycine betaine. Catalyzes the oxidation of choline to betaine aldehyde and betaine aldehyde to glycine betaine at the same rate. This Yersinia pseudotuberculosis serotype IB (strain PB1/+) protein is Oxygen-dependent choline dehydrogenase.